A 155-amino-acid polypeptide reads, in one-letter code: Large ribosomal subunit protein uL30 (155 aa).

Belongs to the universal ribosomal protein uL30 family. In terms of assembly, part of the 50S ribosomal subunit.

In Pyrococcus horikoshii (strain ATCC 700860 / DSM 12428 / JCM 9974 / NBRC 100139 / OT-3), this protein is Large ribosomal subunit protein uL30.